We begin with the raw amino-acid sequence, 419 residues long: Probable pectate lyase C (419 aa).

The first 19 residues, Met-1–Ala-19, serve as a signal peptide directing secretion. 3 N-linked (GlcNAc...) asparagine glycosylation sites follow: Asn-48, Asn-164, and Asn-201. Residue Arg-204 is part of the active site. Positions Asn-261 to Met-296 constitute an EF-hand domain. The Ca(2+) site is built by Asp-274, Asp-276, Asp-278, and Thr-280. N-linked (GlcNAc...) asparagine glycosylation is present at Asn-282. Glu-285 contributes to the Ca(2+) binding site. A disordered region spans residues Ala-350–Ser-395. Residues Asp-363–Asp-372 are compositionally biased toward low complexity. The span at Thr-373–Leu-386 shows a compositional bias: acidic residues.

This sequence belongs to the polysaccharide lyase 1 family. The cofactor is Ca(2+).

It localises to the secreted. The enzyme catalyses Eliminative cleavage of (1-&gt;4)-alpha-D-galacturonan to give oligosaccharides with 4-deoxy-alpha-D-galact-4-enuronosyl groups at their non-reducing ends.. Functionally, pectinolytic enzyme consist of four classes of enzymes: pectin lyase, polygalacturonase, pectin methylesterase and rhamnogalacturonase. Among pectinolytic enzymes, pectin lyase is the most important in depolymerization of pectin, since it cleaves internal glycosidic bonds of highly methylated pectins. Favors pectate, the anion, over pectin, the methyl ester. This chain is Probable pectate lyase C (plyC), found in Aspergillus flavus (strain ATCC 200026 / FGSC A1120 / IAM 13836 / NRRL 3357 / JCM 12722 / SRRC 167).